Here is a 363-residue protein sequence, read N- to C-terminus: Phospho-N-acetylmuramoyl-pentapeptide-transferase (363 aa).

Transmembrane regions (helical) follow at residues 4–24 (NLLV…NVIV), 28–48 (IAIL…IKYF), 72–92 (TPTM…LMLA), 96–116 (NIYV…GLID), 129–149 (INAT…CMIV), 169–189 (LTID…IGSS), 200–220 (GLVT…CYLA), 241–261 (ELTV…WYNI), 266–286 (IFMG…ISVI), 294–314 (GIIG…IYSI), and 342–362 (IVSR…SSLI).

It belongs to the glycosyltransferase 4 family. MraY subfamily. The cofactor is Mg(2+).

The protein localises to the cell inner membrane. The catalysed reaction is UDP-N-acetyl-alpha-D-muramoyl-L-alanyl-gamma-D-glutamyl-meso-2,6-diaminopimeloyl-D-alanyl-D-alanine + di-trans,octa-cis-undecaprenyl phosphate = di-trans,octa-cis-undecaprenyl diphospho-N-acetyl-alpha-D-muramoyl-L-alanyl-D-glutamyl-meso-2,6-diaminopimeloyl-D-alanyl-D-alanine + UMP. It functions in the pathway cell wall biogenesis; peptidoglycan biosynthesis. In terms of biological role, catalyzes the initial step of the lipid cycle reactions in the biosynthesis of the cell wall peptidoglycan: transfers peptidoglycan precursor phospho-MurNAc-pentapeptide from UDP-MurNAc-pentapeptide onto the lipid carrier undecaprenyl phosphate, yielding undecaprenyl-pyrophosphoryl-MurNAc-pentapeptide, known as lipid I. In Orientia tsutsugamushi (strain Ikeda) (Rickettsia tsutsugamushi), this protein is Phospho-N-acetylmuramoyl-pentapeptide-transferase.